A 122-amino-acid polypeptide reads, in one-letter code: Large ribosomal subunit protein uL18 (122 aa).

This sequence belongs to the universal ribosomal protein uL18 family. In terms of assembly, part of the 50S ribosomal subunit; part of the 5S rRNA/L5/L18/L25 subcomplex. Contacts the 5S and 23S rRNAs.

In terms of biological role, this is one of the proteins that bind and probably mediate the attachment of the 5S RNA into the large ribosomal subunit, where it forms part of the central protuberance. The chain is Large ribosomal subunit protein uL18 from Desulfatibacillum aliphaticivorans.